We begin with the raw amino-acid sequence, 496 residues long: L-arabinose isomerase (496 aa).

Residues E302, E329, H346, and H445 each contribute to the Mn(2+) site.

This sequence belongs to the arabinose isomerase family. Requires Mn(2+) as cofactor.

It catalyses the reaction beta-L-arabinopyranose = L-ribulose. Its pathway is carbohydrate degradation; L-arabinose degradation via L-ribulose; D-xylulose 5-phosphate from L-arabinose (bacterial route): step 1/3. Catalyzes the conversion of L-arabinose to L-ribulose. This is L-arabinose isomerase from Thermotoga sp. (strain RQ2).